The primary structure comprises 419 residues: Dual specificity protein phosphatase 7 (419 aa).

Residues 1-47 (MKNQLRGPPARAHMSTSGAAAAGGTRAGSEPGAGSGSGAGTGAGAAT) are disordered. Positions 10-29 (ARAHMSTSGAAAAGGTRAGS) are enriched in low complexity. The span at 31–47 (PGAGSGSGAGTGAGAAT) shows a compositional bias: gly residues. The region spanning 68–187 (GGASLLLLDC…FQTEYSEHCE (120 aa)) is the Rhodanese domain. The tract at residues 216–240 (CSDGESDRELPSSATESDGSPVPSS) is disordered. Residues 227–240 (SSATESDGSPVPSS) show a composition bias toward polar residues. A Tyrosine-protein phosphatase domain is found at 244-387 (FPVQILPYLY…LLDFERTLGL (144 aa)). The active-site Phosphocysteine intermediate is the cysteine 331. 331–337 (CLAGISR) contributes to the substrate binding site.

Belongs to the protein-tyrosine phosphatase family. Non-receptor class dual specificity subfamily. Interacts with MAPK1/ERK2; the interaction enhances DUSP7 phosphatase activity. Strongly expressed in liver. Expressed at significantly higher levels in malignant hematopoietic cells than in corresponding non-malignant cells.

It localises to the cytoplasm. It carries out the reaction O-phospho-L-tyrosyl-[protein] + H2O = L-tyrosyl-[protein] + phosphate. The enzyme catalyses O-phospho-L-seryl-[protein] + H2O = L-seryl-[protein] + phosphate. It catalyses the reaction O-phospho-L-threonyl-[protein] + H2O = L-threonyl-[protein] + phosphate. With respect to regulation, strongly inhibited by sodium orthovanadate. In terms of biological role, dual specificity protein phosphatase. Shows high activity towards MAPK1/ERK2. Also has lower activity towards MAPK14 and MAPK8. In arrested oocytes, plays a role in meiotic resumption. Promotes nuclear envelope breakdown and activation of the CDK1/Cyclin-B complex in oocytes, probably by dephosphorylating and inactivating the conventional protein kinase C (cPKC) isozyme PRKCB. May also inactivate PRKCA and/or PRKCG. Also important in oocytes for normal chromosome alignment on the metaphase plate and progression to anaphase, where it might regulate activity of the spindle-assembly checkpoint (SAC) complex. This chain is Dual specificity protein phosphatase 7, found in Homo sapiens (Human).